The chain runs to 152 residues: Protein eva-1 homolog A (152 aa).

Residues 1 to 60 (MRLPLSHSPEHVEMALLSNILAAYSFVSENPERAALYFVSGVCIGLVLTLAALVIRISCH) are necessary for the localization and biological activity. The helical transmembrane segment at 35–55 (ALYFVSGVCIGLVLTLAALVI) threads the bilayer. The disordered stretch occupies residues 70–97 (KFLQDRESSSDSSDSEDGSEDTVSDLSV). Acidic residues predominate over residues 82–92 (SDSEDGSEDTV). Threonine 106 carries the phosphothreonine modification. Serine 114 bears the Phosphoserine; by FAM20C mark.

Belongs to the EVA1 family. As to expression, expressed in lung, kidney, liver, pancreas, placenta, but not in heart and skeletal muscle.

The protein localises to the endoplasmic reticulum membrane. The protein resides in the lysosome membrane. Its function is as follows. Acts as a regulator of programmed cell death, mediating both autophagy and apoptosis. This chain is Protein eva-1 homolog A (EVA1A), found in Homo sapiens (Human).